Reading from the N-terminus, the 421-residue chain is Type II methyltransferase M.SfiI (421 aa).

It belongs to the N(4)/N(6)-methyltransferase family. N(4) subfamily.

The catalysed reaction is a 2'-deoxycytidine in DNA + S-adenosyl-L-methionine = an N(4)-methyl-2'-deoxycytidine in DNA + S-adenosyl-L-homocysteine + H(+). A beta subtype methylase, recognizes the double-stranded sequence 5'-GGCCNNNNNGGCC-3', methylates C-? on both strands, and protects the DNA from cleavage by the SfiI endonuclease. The chain is Type II methyltransferase M.SfiI from Streptomyces fimbriatus.